The primary structure comprises 540 residues: CTP synthase (540 aa).

Residues 1 to 267 (MKIMKFIFIT…GKLVTKKLNL (267 aa)) form an amidoligase domain region. S15 contributes to the CTP binding site. S15 lines the UTP pocket. 16 to 21 (SLGKGI) provides a ligand contact to ATP. Residue Y56 coordinates L-glutamine. D73 serves as a coordination point for ATP. Residues D73 and E141 each contribute to the Mg(2+) site. CTP-binding positions include 148–150 (DIE), 188–193 (KTKPTQ), and K224. UTP-binding positions include 188–193 (KTKPTQ) and K224. 240 to 242 (RDA) provides a ligand contact to ATP. Residues 292–540 (TIGIVGKYVE…VRASLGEKIK (249 aa)) enclose the Glutamine amidotransferase type-1 domain. Residue G360 coordinates L-glutamine. C387 serves as the catalytic Nucleophile; for glutamine hydrolysis. L-glutamine contacts are provided by residues 388 to 391 (MGMQ), E411, and R468. Catalysis depends on residues H513 and E515.

It belongs to the CTP synthase family. In terms of assembly, homotetramer.

It carries out the reaction UTP + L-glutamine + ATP + H2O = CTP + L-glutamate + ADP + phosphate + 2 H(+). The enzyme catalyses L-glutamine + H2O = L-glutamate + NH4(+). The catalysed reaction is UTP + NH4(+) + ATP = CTP + ADP + phosphate + 2 H(+). It participates in pyrimidine metabolism; CTP biosynthesis via de novo pathway; CTP from UDP: step 2/2. With respect to regulation, allosterically activated by GTP, when glutamine is the substrate; GTP has no effect on the reaction when ammonia is the substrate. The allosteric effector GTP functions by stabilizing the protein conformation that binds the tetrahedral intermediate(s) formed during glutamine hydrolysis. Inhibited by the product CTP, via allosteric rather than competitive inhibition. In terms of biological role, catalyzes the ATP-dependent amination of UTP to CTP with either L-glutamine or ammonia as the source of nitrogen. Regulates intracellular CTP levels through interactions with the four ribonucleotide triphosphates. This chain is CTP synthase, found in Methanocaldococcus jannaschii (strain ATCC 43067 / DSM 2661 / JAL-1 / JCM 10045 / NBRC 100440) (Methanococcus jannaschii).